The chain runs to 446 residues: MEYAVSVESFLSSLQRHNPHQPEYLQAVREVFTSLWPFIERNPAYREQALLERLVEPERIIQFRVSWVDDRGQVQVNRAFRVQFNSAIGPYKGGMRFHPSVNLSILKFLGFEQTFKNALTTLPMGGGKGGSDFDPKGKSQGRIMRFCQALMTELYRHLGPDTDVPAGDIGDGGREVGFMAGMMKKLSNNTACVFTGKGLSFGGSLIRPEATGYGLVYFTDAMLQRHGLGFEGMRVAVSGSGNVAQYTIEKALELDARVITVSDSGGTLVDEDGFTTEKLAHLAEIKNQRYGRVADYAAERGLTYLAGQQPWNVPVDIALPCATQNELDLEAARVIRNGVKAVAEGANMPTTIQATDAFLDAGVLFAPGKAANAAGLATSGLEMAQNAARIGWRAEKVDVRLQHIMADIHHACVEYGGEGKQTHYVHGANIAGFVKVAEAMLAQGVL.

3 residues coordinate substrate: K92, Q113, and K116. The active-site Proton donor is the K128. G167 provides a ligand contact to substrate. T211 and N242 together coordinate NADP(+). Position 379 (S379) interacts with substrate.

Belongs to the Glu/Leu/Phe/Val dehydrogenases family. Homohexamer.

It catalyses the reaction L-glutamate + NADP(+) + H2O = 2-oxoglutarate + NH4(+) + NADPH + H(+). Functionally, catalyzes the reversible oxidative deamination of glutamate to a-ketoglutarate and ammonia. In Unknown prokaryotic organism, this protein is NADP-specific glutamate dehydrogenase (gdhA).